Here is a 25-residue protein sequence, read N- to C-terminus: Kunitz-type serine protease inhibitor 2 (25 aa).

In terms of domain architecture, BPTI/Kunitz inhibitor spans 6 to 25; that stretch reads VCELPKEVGGPCRGHIIPRY.

Its subcellular location is the secreted. Its function is as follows. Inhibits bovine trypsin, human plasma kallikrein and human neutrophil elastase. The protein is Kunitz-type serine protease inhibitor 2 of Rhipicephalus microplus (Cattle tick).